The primary structure comprises 274 residues: Exosome complex component RRP40 (274 aa).

A2 is subject to N-acetylalanine. A Glycyl lysine isopeptide (Lys-Gly) (interchain with G-Cter in SUMO2) cross-link involves residue K150.

It belongs to the RRP40 family. In terms of assembly, component of the RNA exosome core complex (Exo-9), composed of EXOSC1, EXOSC2, EXOSC3, EXOSC4, EXOSC5, EXOSC6, EXOSC7, EXOSC8 and EXOSC9; within the complex interacts with EXOSC5 and EXOSC9. The catalytically inactive RNA exosome core complex (Exo-9) associates with the catalytic subunit EXOSC10/RRP6. Exo-9 may associate with DIS3 to form the nucleolar exosome complex, or DIS3L to form the cytoplasmic exosome complex. Exo-9 is formed by a hexameric base ring consisting of the heterodimers EXOSC4-EXOSC9, EXOSC5-EXOSC8 and EXOSC6-EXOSC7, and a cap ring consisting of EXOSC1, EXOSC2 and EXOSC3. The RNA exosome complex associates with cofactors C1D/RRP47, MPHOSPH6/MPP6 and MTREX/MTR4. Interacts with MPHOSPH6/MPP6; the interaction is direct. Interacts with GTPBP1. Interacts with ZC3HAV1. Interacts with DDX17 only in the presence of ZC3HAV1 in an RNA-independent manner. Interacts with DHX36; this interaction occurs in a RNase-insensitive manner. Interacts with HBS1L isoform 2.

The protein localises to the cytoplasm. It localises to the nucleus. It is found in the nucleolus. In terms of biological role, non-catalytic component of the RNA exosome complex which has 3'-&gt;5' exoribonuclease activity and participates in a multitude of cellular RNA processing and degradation events. In the nucleus, the RNA exosome complex is involved in proper maturation of stable RNA species such as rRNA, snRNA and snoRNA, in the elimination of RNA processing by-products and non-coding 'pervasive' transcripts, such as antisense RNA species and promoter-upstream transcripts (PROMPTs), and of mRNAs with processing defects, thereby limiting or excluding their export to the cytoplasm. The RNA exosome may be involved in Ig class switch recombination (CSR) and/or Ig variable region somatic hypermutation (SHM) by targeting AICDA deamination activity to transcribed dsDNA substrates. In the cytoplasm, the RNA exosome complex is involved in general mRNA turnover and specifically degrades inherently unstable mRNAs containing AU-rich elements (AREs) within their 3' untranslated regions, and in RNA surveillance pathways, preventing translation of aberrant mRNAs. It seems to be involved in degradation of histone mRNA. The catalytic inactive RNA exosome core complex of 9 subunits (Exo-9) is proposed to play a pivotal role in the binding and presentation of RNA for ribonucleolysis, and to serve as a scaffold for the association with catalytic subunits and accessory proteins or complexes. EXOSC3 as peripheral part of the Exo-9 complex stabilizes the hexameric ring of RNase PH-domain subunits through contacts with EXOSC9 and EXOSC5. The sequence is that of Exosome complex component RRP40 (Exosc3) from Mus musculus (Mouse).